Consider the following 369-residue polypeptide: Opsin Rh6 (369 aa).

The Extracellular portion of the chain corresponds to 1–46 (MASLHPPSFAYMRDGRNLSLAESVPAEIMHMVDPYWYQWPPLEPMW). An N-linked (GlcNAc...) asparagine glycan is attached at asparagine 17. The helical transmembrane segment at 47–71 (FGIIGFVIAILGTMSLAGNFIVMYI) threads the bilayer. Residues 72–83 (FTSSKGLRTPSN) are Cytoplasmic-facing. Residues 84–109 (MFVVNLAFSDFMMMFTMFPPVVLNGF) traverse the membrane as a helical segment. Topologically, residues 110–123 (YGTWIMGPFLCELY) are extracellular. Cysteines 120 and 197 form a disulfide. The helical transmembrane segment at 124–143 (GMFGSLFGCVSIWSMTLIAY) threads the bilayer. Residues 144 to 162 (DRYCVIVKGMARKPLTATA) are Cytoplasmic-facing. Residues 163–186 (AVLRLMVVWTICGAWALMPLFGWN) form a helical membrane-spanning segment. Over 187-210 (RYVPEGNMTACGTDYFAKDWWNRS) the chain is Extracellular. N-linked (GlcNAc...) asparagine glycans are attached at residues asparagine 193 and asparagine 208. The chain crosses the membrane as a helical span at residues 211–238 (YIIVYSLWVYLTPLLTIIFSYWHIMKAV). Residues 239–274 (AAHEKAMREQAKKMNVASLRNSEADKSKAIEIKLAK) are Cytoplasmic-facing. The chain crosses the membrane as a helical span at residues 275 to 298 (VALTTISLWFFAWTPYTIINYAGI). Residues 299-305 (FESMHLS) lie on the Extracellular side of the membrane. Residues 306-330 (PLSTICGSVFAKANAVCNPIVYGLS) form a helical membrane-spanning segment. N6-(retinylidene)lysine is present on lysine 317. Residues 331–369 (HPKYKQVLREKMPCLACGKDDLTSDSRTQATAEISESQA) are Cytoplasmic-facing.

Belongs to the G-protein coupled receptor 1 family. Opsin subfamily. In terms of processing, phosphorylated on some or all of the serine and threonine residues present in the C-terminal region. In terms of tissue distribution, each Drosophila eye is composed of 800 facets or ommatidia. Each ommatidium contains 8 photoreceptor cells (R1-R8), the R1 to R6 cells are outer cells, while R7 and R8 are inner cells. Rh6 is expressed in a subset of R8 cells, most likely expressed in the subset of R8 cells paired with Rh4-expressing R7 cells (R7y).

The protein resides in the membrane. Functionally, visual pigments are the light-absorbing molecules that mediate vision. They consist of an apoprotein, opsin, covalently linked to cis-retinal. The chain is Opsin Rh6 (Rh6) from Drosophila melanogaster (Fruit fly).